The sequence spans 219 residues: Transmembrane emp24 domain-containing protein 10 (219 aa).

The N-terminal stretch at 1-31 (MSGLFGPLSRPGPLPSAWLFLLLLGPSSVLG) is a signal peptide. The tract at residues 1 to 142 (MSGLFGPLSR…KNYEEIAKVE (142 aa)) is required for interaction with STX17. Over 32 to 185 (ISFHLPVNSR…RDTNESTNTR (154 aa)) the chain is Lumenal. A GOLD domain is found at 41 to 193 (RKCLREEIHK…TRVLYFSIFS (153 aa)). The required for TMED10 and TMED2 cis-Golgi network localization stretch occupies residues 147 to 178 (LEVELRRLEDLSESIVNDFAYMKKREEEMRDT). Arg-171 and Arg-176 each carry dimethylated arginine. Asn-179 is a glycosylation site (N-linked (GlcNAc...) asparagine). The helical transmembrane segment at 186–206 (VLYFSIFSMFCLIGLATWQVF) threads the bilayer. Residues 204–219 (QVFYLRRFFKAKKLIE) are interaction with COPG1. The Cytoplasmic segment spans residues 207–219 (YLRRFFKAKKLIE). Residues 207–219 (YLRRFFKAKKLIE) form an interaction with ARF1 and IL1B region. A COPII vesicle coat-binding motif is present at residues 211-212 (FF). The COPI vesicle coat-binding motif lies at 211–219 (FFKAKKLIE).

This sequence belongs to the EMP24/GP25L family. Predominantly dimeric and to a lesser extent monomeric in the ER. Monomer and dimer in ERGIC and cis-Golgi network. Forms homooligomer (via GOLD domain); the assembly is promoted by direct binding with leaderless cargos and may form a protein channel that facilitates cargo entry into the ERGIC. Forms heterooligomeric complexes with other members of the p24 family such as TMED2, TMED7 and TMED9. Interacts (via GOLD domain) with TMED2 (via GOLD domain); the complex is required for export of TMED10 from the ER to the cis-Golgi network; the complex is proposed to be involved in cis-Golgi network dynamics and / or biogenesis. Associates with the COPI vesicle coat subunits (coatomer). Tetramerization of the cytoplasmic domain at the Golgi membrane in vitro; the complex is proposed to interact with COPI coatomer and induce budding of the vesicles. Interacts with COPG1; the interaction involves TMED10 homodimer. Interacts with ARF1 (GDP-bound); the interaction probably involves a TMED10 oligomer. Interacts with SEC23A, SEC24B, SEC24C and SEC24D components of the coat protein complex II/COPII, indicative of an association of TMED10 with the COPII vesicle coat. Interacts with CD59. Interacts with MPPE1/PGAP5; the complex might recruit and sort GPI-anchored proteins to the ER-exit site, or the interaction might lead to recycling of PGAP5 between the ER and the Golgi. Interacts with F2LR1/PAR2. Interacts with KDELR2/ERD2; the interaction is disrupted by KDELR2 ligand. Found in a complex composed at least of SURF4, TMED2 and TMED10. Associates with the presenilin-dependent gamma-secretase complex. Interacts with STX17; the interaction is direct. Interacts with IL-1; the interaction is direct. Interacts with RAB21 (active GTP-bound form); the interaction is indirect and regulates TMED10 abundance and localization at the Golgi.

Its subcellular location is the endoplasmic reticulum membrane. The protein localises to the endoplasmic reticulum-Golgi intermediate compartment membrane. The protein resides in the golgi apparatus membrane. It localises to the golgi apparatus. It is found in the cis-Golgi network membrane. Its subcellular location is the trans-Golgi network membrane. The protein localises to the cytoplasmic vesicle. The protein resides in the secretory vesicle membrane. It localises to the cell membrane. It is found in the melanosome. Cargo receptor involved in protein vesicular trafficking and quality control in the endoplasmic reticulum (ER) and Golgi. The p24 protein family is a group of transmembrane proteins that bind coat protein complex I/COPI and coat protein complex II/COPII involved in vesicular trafficking between the membranes. Acts at the lumenal side for incorporation of secretory cargo molecules into transport vesicles and involved in vesicle coat formation at the cytoplasmic side. Mainly functions in the early secretory pathway and cycles between the ER, ER-Golgi intermediate compartment (ERGIC) and Golgi, mediating cargo transport through COPI and COPII-coated vesicles. In COPII vesicle-mediated anterograde transport, involved in the transport of GPI-anchored proteins by acting together with TMED2 as their cargo receptor; the function specifically implies SEC24C and SEC24D of the COPII vesicle coat and lipid raft-like microdomains of the ER. Recognizes GPI anchors structural remodeled in the ER by the GPI inositol-deacylase/PGAP1 and the metallophosphoesterase MPPE1/PGAP5. In COPI vesicle-mediated retrograde transport, involved in the biogenesis of COPI vesicles and vesicle coat recruitment. Involved in trafficking of amyloid beta A4 protein and soluble APP-beta release (independent from the modulation of gamma-secretase activity). Involved in the KDELR2-mediated retrograde transport of the toxin A subunit (CTX-A-K63)together with COPI and the COOH terminus of KDELR2. On Golgi membranes, acts as a primary receptor for ARF1-GDP, a GTP-binding protein involved in COPI-vesicle formation. Increases coatomer-dependent GTPase-activating activity of ARFGAP2 which mediates the hydrolysis of ARF1-bound GTP and therefore modulates protein trafficking from the Golgi apparatus. Involved in the exocytic trafficking of G protein-coupled receptors F2LR1/PAR2 (trypsin and tryspin-like enzyme receptor), OPRM1 (opioid receptor) and P2RY4 (UTD and UDP receptor) from the Golgi to the plasma membrane, thus contributing to receptor resensitization. In addition to its cargo receptor activity, may also act as a protein channel after oligomerization, facilitating the post-translational entry of leaderless cytoplasmic cargo into the ERGIC. Involved in the translocation into ERGIC, the vesicle entry and the secretion of leaderless cargos (lacking the secretion signal sequence), including the mature form of interleukin 1/IL-1 family members, the alpha-crystallin B chain HSPB5, the carbohydrate-binding proteins galectin-1/LGALS1 and galectin-3/LGALS3, the microtubule-associated protein Tau/MAPT, and the annexin A1/ANXA1; the translocation process is dependent on cargo protein unfolding and enhanced by chaperones HSP90AB1 and HSP90B1/GRP9. Could also associates with the presenilin-dependent gamma-secretase complex in order to regulate gamma-cleavages of the amyloid beta A4 protein to yield amyloid-beta 40/Abeta40. The sequence is that of Transmembrane emp24 domain-containing protein 10 from Mus musculus (Mouse).